Consider the following 428-residue polypeptide: 3-phosphoshikimate 1-carboxyvinyltransferase (428 aa).

Residues lysine 22, serine 23, and arginine 27 each contribute to the 3-phosphoshikimate site. Lysine 22 provides a ligand contact to phosphoenolpyruvate. Residues glycine 96 and arginine 124 each contribute to the phosphoenolpyruvate site. Serine 169, serine 170, glutamine 171, serine 197, aspartate 313, asparagine 336, and lysine 340 together coordinate 3-phosphoshikimate. Residue glutamine 171 coordinates phosphoenolpyruvate. Aspartate 313 serves as the catalytic Proton acceptor. Positions 344, 386, and 411 each coordinate phosphoenolpyruvate.

It belongs to the EPSP synthase family. Monomer.

The protein localises to the cytoplasm. The catalysed reaction is 3-phosphoshikimate + phosphoenolpyruvate = 5-O-(1-carboxyvinyl)-3-phosphoshikimate + phosphate. Its pathway is metabolic intermediate biosynthesis; chorismate biosynthesis; chorismate from D-erythrose 4-phosphate and phosphoenolpyruvate: step 6/7. Functionally, catalyzes the transfer of the enolpyruvyl moiety of phosphoenolpyruvate (PEP) to the 5-hydroxyl of shikimate-3-phosphate (S3P) to produce enolpyruvyl shikimate-3-phosphate and inorganic phosphate. The protein is 3-phosphoshikimate 1-carboxyvinyltransferase of Xenorhabdus nematophila (strain ATCC 19061 / DSM 3370 / CCUG 14189 / LMG 1036 / NCIMB 9965 / AN6).